A 604-amino-acid polypeptide reads, in one-letter code: MDCMYDAELVDVVKNTSNESILPILEQKINLLVSSGETKCYRTLKRILYDFVTRKHLDGIMYILDSELLTDNVIRKIDRYCILLSCKFGFVELLEYLDEIGVDILVEKIYLELIFEDSFKYSRYDHDDEYYDDHFFKSSIHYAVKYGHMNIIEYLSCKKTNADGLLSACSLKNIQLVKYFLDQQNYDDNTIYHGLRSACWNGDLEMVKYFMQYIPEDKRNNVFILDHVCEEGYFDILVYLIEQKWKIDVEFAIKQTVMGGRLEMLKYLIAQYPDSKYSVVKLIETISYCGKDETLEYLLSFEDSKLKKFIKSNKFSKLLEVVCERGYLKVFKILFHLNENVDLREAFSNACQNGHLDIVQYIISNKKEFTDKNFLENDQEHITYLTRITFAKGHLDILKCLDEIGISRSYISEYAASLVIGNGFRSKKTLECVQWLFEDEKYHKYSQAIAVKAFRYDTVSVIKYLVSVGLDIKPITNIALDYICINNNMDCLKYLIENGTDITINDNRAIKLAAQEDNIDIVKCLVENGADIRTDDDYVMKICTLRNHKVLIRYLMSLDIKEPSNESIESIEPINTIKNPNKSEKNWIKHHCESIYYTKLMDRP.

ANK repeat units follow at residues 77–106 (IDRY…DILV), 135–164 (FFKS…NADG), 166–189 (LSAC…YDDN), 190–219 (TIYH…EDKR), 221–247 (NVFI…KWKI), 248–277 (DVEF…DSKY), 314–341 (KFSK…NENV), 342–371 (DLRE…EFTD), 380–410 (EHIT…SRSY), 445–474 (YSQA…DIKP), 475–504 (ITNI…DITI), 505–534 (NDNR…DIRT), and 535–565 (DDDY…EPSN).

The protein is Putative ankyrin repeat protein L56 of Acanthamoeba polyphaga (Amoeba).